The sequence spans 428 residues: Gamma-glutamyl phosphate reductase (428 aa).

It belongs to the gamma-glutamyl phosphate reductase family.

It is found in the cytoplasm. The enzyme catalyses L-glutamate 5-semialdehyde + phosphate + NADP(+) = L-glutamyl 5-phosphate + NADPH + H(+). Its pathway is amino-acid biosynthesis; L-proline biosynthesis; L-glutamate 5-semialdehyde from L-glutamate: step 2/2. Functionally, catalyzes the NADPH-dependent reduction of L-glutamate 5-phosphate into L-glutamate 5-semialdehyde and phosphate. The product spontaneously undergoes cyclization to form 1-pyrroline-5-carboxylate. The protein is Gamma-glutamyl phosphate reductase of Hyphomonas neptunium (strain ATCC 15444).